A 176-amino-acid chain; its full sequence is Cytochrome b (176 aa).

3 helical membrane-spanning segments follow: residues 33-53, 77-98, and 113-133; these read FGSLLGICLVLQISTGLFLAM, WVLRYLHANGASMFFICLYLHV, and WNVGVILLFATMATAFMGYVL. Residues His-83 and His-97 each contribute to the heme b site.

Belongs to the cytochrome b family. As to quaternary structure, the cytochrome bc1 complex contains 11 subunits: 3 respiratory subunits (MT-CYB, CYC1 and UQCRFS1), 2 core proteins (UQCRC1 and UQCRC2) and 6 low-molecular weight proteins (UQCRH/QCR6, UQCRB/QCR7, UQCRQ/QCR8, UQCR10/QCR9, UQCR11/QCR10 and a cleavage product of UQCRFS1). This cytochrome bc1 complex then forms a dimer. Requires heme b as cofactor.

It localises to the mitochondrion inner membrane. Component of the ubiquinol-cytochrome c reductase complex (complex III or cytochrome b-c1 complex) that is part of the mitochondrial respiratory chain. The b-c1 complex mediates electron transfer from ubiquinol to cytochrome c. Contributes to the generation of a proton gradient across the mitochondrial membrane that is then used for ATP synthesis. This is Cytochrome b (MT-CYB) from Corynorhinus rafinesquii (Rafinesque's big-eared bat).